The primary structure comprises 559 residues: Kelch repeat and BTB domain-containing protein 2 (559 aa).

Positions 26–95 (CDVIITIGDG…LYNRHISSMN (70 aa)) constitute a BTB domain. The BACK domain maps to 128–223 (CIYIYHRLYE…CIDIQNLDKK (96 aa)). Kelch repeat units follow at residues 305 to 352 (EIII…VIDD), 353 to 399 (MIYA…VFDQ), and 401 to 463 (IYII…SHKD).

In terms of assembly, interacts (via BTB domain) with host CUL3.

The protein resides in the host cytoplasm. Probable substrate-specific adapter of CUL3-containing E3 ubiquitin-protein ligases which mediate the ubiquitination and subsequent proteasomal degradation of host target proteins. The polypeptide is Kelch repeat and BTB domain-containing protein 2 (KBTB2) (Mus musculus (Mouse)).